Here is a 246-residue protein sequence, read N- to C-terminus: Probable transcriptional regulatory protein CA_C2295 (246 aa).

The protein belongs to the TACO1 family.

It is found in the cytoplasm. In Clostridium acetobutylicum (strain ATCC 824 / DSM 792 / JCM 1419 / IAM 19013 / LMG 5710 / NBRC 13948 / NRRL B-527 / VKM B-1787 / 2291 / W), this protein is Probable transcriptional regulatory protein CA_C2295.